Consider the following 295-residue polypeptide: Ethanolamine ammonia-lyase small subunit (295 aa).

Residues V207, E228, and C258 each contribute to the adenosylcob(III)alamin site.

It belongs to the EutC family. The basic unit is a heterodimer which dimerizes to form tetramers. The heterotetramers trimerize; 6 large subunits form a core ring with 6 small subunits projecting outwards. Requires adenosylcob(III)alamin as cofactor.

Its subcellular location is the bacterial microcompartment. The enzyme catalyses ethanolamine = acetaldehyde + NH4(+). It participates in amine and polyamine degradation; ethanolamine degradation. In terms of biological role, catalyzes the deamination of various vicinal amino-alcohols to oxo compounds. Allows this organism to utilize ethanolamine as the sole source of nitrogen and carbon in the presence of external vitamin B12. In Escherichia fergusonii (strain ATCC 35469 / DSM 13698 / CCUG 18766 / IAM 14443 / JCM 21226 / LMG 7866 / NBRC 102419 / NCTC 12128 / CDC 0568-73), this protein is Ethanolamine ammonia-lyase small subunit.